Consider the following 157-residue polypeptide: MRAVIQRVSEASVTVDGRVIGAIGRGLLILLGVGVGDTEAEAKLLAEKSANLRIFADDEGRFNRSLLDIGGEALVVSQFTLYADTRRGRRPSFSDAAPPEIAAPLVEAFANELQRLGIAVGAGQFGAMMQVALVNDGPVTILLDSAIFREPRNRHER.

The Gly-cisPro motif, important for rejection of L-amino acids signature appears at 137 to 138 (GP).

This sequence belongs to the DTD family. In terms of assembly, homodimer.

It is found in the cytoplasm. The catalysed reaction is glycyl-tRNA(Ala) + H2O = tRNA(Ala) + glycine + H(+). It catalyses the reaction a D-aminoacyl-tRNA + H2O = a tRNA + a D-alpha-amino acid + H(+). Functionally, an aminoacyl-tRNA editing enzyme that deacylates mischarged D-aminoacyl-tRNAs. Also deacylates mischarged glycyl-tRNA(Ala), protecting cells against glycine mischarging by AlaRS. Acts via tRNA-based rather than protein-based catalysis; rejects L-amino acids rather than detecting D-amino acids in the active site. By recycling D-aminoacyl-tRNA to D-amino acids and free tRNA molecules, this enzyme counteracts the toxicity associated with the formation of D-aminoacyl-tRNA entities in vivo and helps enforce protein L-homochirality. The sequence is that of D-aminoacyl-tRNA deacylase from Roseiflexus castenholzii (strain DSM 13941 / HLO8).